The following is a 405-amino-acid chain: Terminal uridylyltransferase cid1 (405 aa).

UTP is bound at residue Ser-90. Mg(2+) contacts are provided by Asp-101 and Asp-103. UTP is bound by residues Ala-168, Asn-171, Thr-172, Lys-193, Lys-197, Ser-211, Tyr-212, and His-336. The PAP-associated domain maps to 267 to 336 (SLGSLLHGFF…AIEDPFEISH (70 aa)). Arg-340 is a binding site for ATP. Positions 377-405 (APIPPRRQKKTDEQSNKKLLNETDGDNSE) are disordered. The segment covering 386 to 397 (KTDEQSNKKLLN) has biased composition (basic and acidic residues).

This sequence belongs to the DNA polymerase type-B-like family. Mg(2+) serves as cofactor. Requires Mn(2+) as cofactor.

The protein localises to the cytoplasm. The enzyme catalyses RNA(n) + UTP = RNA(n)-3'-uridine ribonucleotide + diphosphate. It catalyses the reaction RNA(n) + ATP = RNA(n)-3'-adenine ribonucleotide + diphosphate. Cytoplasmic uridylyltransferase that mediates the terminal uridylation of mRNAs with short poly(A) tails such as such as act1, hcn1 and urg1 mRNAs, hence facilitating global mRNA decay. Uridylates the 3' ends of actin mRNAs upon S-phase arrest. Also has a weak poly(A) polymerase (PAP) activity. Residue His-336 is responsible for the specificity for UTP. Involved in cell cycle arrest where in association with crb2/rhp9 and chk1 it inhibits unscheduled mitosis. The protein is Terminal uridylyltransferase cid1 of Schizosaccharomyces pombe (strain 972 / ATCC 24843) (Fission yeast).